A 294-amino-acid polypeptide reads, in one-letter code: GTRLNGAKGKIDAKVHSPSGAVEECHVSELEPDKYAVRFIPHENGIHTIDVKFNGSHVVGSPFKVRVGEPGQAGNPALVSAYGAGLEGGTTGIQSEFFINTTRAGPGTLSVTIEGPSKVKMDCQETPEGYKVMYTPMAPGNYLIGVKYGGPNHIVGSPFKAKVTGQRLVGPGSTNETSSILVESVTRSSTETCYSAIPKASSDASKVTSKGAGLSKAFVGQKSSFLVDCSKAGSNMLLIGVHGPTTPCEEVSMKHVGSQQYNVTYVVKERGEYVLAVKWGEEHIPGSPFHVTVP.

2 Filamin repeats span residues 1–67 (GTRL…KVRV) and 71–163 (GQAG…KAKV). Phosphoserine occurs at positions 61 and 157. A Glycyl lysine isopeptide (Lys-Gly) (interchain with G-Cter in ISG15) cross-link involves residue Lys-160. The tract at residues 164–198 (TGQRLVGPGSTNETSSILVESVTRSSTETCYSAIP) is hinge 2. Residues 164–294 (TGQRLVGPGS…PGSPFHVTVP (131 aa)) form a self-association site, tail region. Ser-173 and Ser-184 each carry phosphoserine. Residues 199-293 (KASSDASKVT…IPGSPFHVTV (95 aa)) form a Filamin 24 repeat. 2 positions are modified to N6-succinyllysine: Lys-210 and Lys-216. Residue Lys-268 is modified to N6-acetyllysine.

The protein belongs to the filamin family. As to quaternary structure, homodimer. Interacts with FLNA, FLNC, INPPL1, ITGB1A, ITGB1D, ITGB3, ITGB6, MYOT, MYOZ1, PSEN1 and PSEN2. Interacts with MICALL2. Interacts with RFLNA and RFLNB. Interacts with HTLV-I viral p13 protein. Interacts with ASB2; the interaction targets FLNB for proteasomal degradation. ISGylation prevents ability to interact with the upstream activators of the JNK cascade and inhibits IFNA-induced JNK signaling. Post-translationally, ubiquitination by a SCF-like complex containing ASB2 leads to proteasomal degradation which promotes muscle differentiation.

Its subcellular location is the cytoplasm. It is found in the cell cortex. The protein localises to the cytoskeleton. It localises to the myofibril. The protein resides in the sarcomere. Its subcellular location is the z line. In terms of biological role, connects cell membrane constituents to the actin cytoskeleton. May promote orthogonal branching of actin filaments and links actin filaments to membrane glycoproteins. Anchors various transmembrane proteins to the actin cytoskeleton. This is Filamin-B (FLNB) from Oryctolagus cuniculus (Rabbit).